Consider the following 350-residue polypeptide: tRNA uridine(34) hydroxylase (350 aa).

The 95-residue stretch at 146–240 (DDPDAVFIDM…YARRAREQGL (95 aa)) folds into the Rhodanese domain. Cys200 acts as the Cysteine persulfide intermediate in catalysis. A compositionally biased stretch (basic and acidic residues) spans 319–328 (RRRRAGRENG). The interval 319 to 350 (RRRRAGRENGNKIFNKSRGRLNSKLSIPDPAE) is disordered.

The protein belongs to the TrhO family.

The enzyme catalyses uridine(34) in tRNA + AH2 + O2 = 5-hydroxyuridine(34) in tRNA + A + H2O. Functionally, catalyzes oxygen-dependent 5-hydroxyuridine (ho5U) modification at position 34 in tRNAs. In Salmonella heidelberg (strain SL476), this protein is tRNA uridine(34) hydroxylase.